A 167-amino-acid chain; its full sequence is Peptidoglycan-binding-like protein (167 aa).

Residues 1–24 form the signal peptide; sequence MRSPKVKFLTIFTLSILITKMSFA.

This sequence belongs to the IagB/IpgF/P19 family.

Its subcellular location is the periplasm. This chain is Peptidoglycan-binding-like protein (pbl), found in Escherichia coli O157:H7.